The following is a 387-amino-acid chain: tRNA N6-adenosine threonylcarbamoyltransferase (387 aa).

Histidine 112 and histidine 116 together coordinate Fe cation. Substrate is bound by residues 134 to 138, aspartate 167, glycine 180, and asparagine 325; that span reads LASGG. Aspartate 353 is a binding site for Fe cation.

It belongs to the KAE1 / TsaD family. Requires Fe(2+) as cofactor.

It is found in the cytoplasm. It catalyses the reaction L-threonylcarbamoyladenylate + adenosine(37) in tRNA = N(6)-L-threonylcarbamoyladenosine(37) in tRNA + AMP + H(+). Its function is as follows. Required for the formation of a threonylcarbamoyl group on adenosine at position 37 (t(6)A37) in tRNAs that read codons beginning with adenine. Is involved in the transfer of the threonylcarbamoyl moiety of threonylcarbamoyl-AMP (TC-AMP) to the N6 group of A37, together with TsaE and TsaB. TsaD likely plays a direct catalytic role in this reaction. This chain is tRNA N6-adenosine threonylcarbamoyltransferase, found in Rickettsia prowazekii (strain Madrid E).